Here is a 239-residue protein sequence, read N- to C-terminus: Pyridoxine 5'-phosphate synthase (239 aa).

Asn-7 contacts 3-amino-2-oxopropyl phosphate. 9–10 (DH) is a 1-deoxy-D-xylulose 5-phosphate binding site. Arg-18 provides a ligand contact to 3-amino-2-oxopropyl phosphate. His-43 serves as the catalytic Proton acceptor. 1-deoxy-D-xylulose 5-phosphate-binding residues include Arg-45 and His-50. Residue Glu-70 is the Proton acceptor of the active site. Thr-100 is a binding site for 1-deoxy-D-xylulose 5-phosphate. His-191 (proton donor) is an active-site residue. 3-amino-2-oxopropyl phosphate is bound by residues Gly-192 and 213 to 214 (GH).

It belongs to the PNP synthase family. In terms of assembly, homooctamer; tetramer of dimers.

Its subcellular location is the cytoplasm. It catalyses the reaction 3-amino-2-oxopropyl phosphate + 1-deoxy-D-xylulose 5-phosphate = pyridoxine 5'-phosphate + phosphate + 2 H2O + H(+). The protein operates within cofactor biosynthesis; pyridoxine 5'-phosphate biosynthesis; pyridoxine 5'-phosphate from D-erythrose 4-phosphate: step 5/5. Functionally, catalyzes the complicated ring closure reaction between the two acyclic compounds 1-deoxy-D-xylulose-5-phosphate (DXP) and 3-amino-2-oxopropyl phosphate (1-amino-acetone-3-phosphate or AAP) to form pyridoxine 5'-phosphate (PNP) and inorganic phosphate. The polypeptide is Pyridoxine 5'-phosphate synthase (Gloeobacter violaceus (strain ATCC 29082 / PCC 7421)).